Here is a 143-residue protein sequence, read N- to C-terminus: Large ribosomal subunit protein uL15 (143 aa).

Positions 1-54 are disordered; sequence MQLNSIKPAPGAKHPKRRVGRGIGSGLGKTAGRGHKGQKSRAGGFHKVGFEGGQ. The segment covering 21 to 31 has biased composition (gly residues); that stretch reads RGIGSGLGKTA.

The protein belongs to the universal ribosomal protein uL15 family. As to quaternary structure, part of the 50S ribosomal subunit.

Its function is as follows. Binds to the 23S rRNA. In Nitrosospira multiformis (strain ATCC 25196 / NCIMB 11849 / C 71), this protein is Large ribosomal subunit protein uL15.